The following is a 359-amino-acid chain: Fructose-bisphosphate aldolase (359 aa).

Ser-61 is a binding site for D-glyceraldehyde 3-phosphate. The active-site Proton donor is the Asp-109. Zn(2+) contacts are provided by His-110, Asp-144, Glu-174, and His-226. Residue Gly-227 coordinates dihydroxyacetone phosphate. His-265 lines the Zn(2+) pocket. Dihydroxyacetone phosphate-binding positions include 266 to 268 and 287 to 290; these read GGS and NIDT.

This sequence belongs to the class II fructose-bisphosphate aldolase family. Zn(2+) serves as cofactor.

It carries out the reaction beta-D-fructose 1,6-bisphosphate = D-glyceraldehyde 3-phosphate + dihydroxyacetone phosphate. The protein operates within carbohydrate degradation; glycolysis; D-glyceraldehyde 3-phosphate and glycerone phosphate from D-glucose: step 4/4. Catalyzes the aldol condensation of dihydroxyacetone phosphate (DHAP or glycerone-phosphate) with glyceraldehyde 3-phosphate (G3P) to form fructose 1,6-bisphosphate (FBP) in gluconeogenesis and the reverse reaction in glycolysis. The polypeptide is Fructose-bisphosphate aldolase (fba) (Borreliella burgdorferi (strain ATCC 35210 / DSM 4680 / CIP 102532 / B31) (Borrelia burgdorferi)).